The sequence spans 639 residues: ADP-ribosylation factor-binding protein GGA1 (639 aa).

The residue at position 1 (Met1) is an N-acetylmethionine. In terms of domain architecture, VHS spans 17–147; that stretch reads ATNPLNKELD…MLKKQGIVKS (131 aa). The tract at residues 114-274 is interaction with ARF3; it reads KILELLYSWT…RLASDTEDND (161 aa). Residues 171–299 form the GAT domain; it reads DEEKSKMLAR…VINLYKQLVR (129 aa). Ser185 is subject to Phosphoserine. A unstructured hinge region spans residues 300–509; it reads GEEVNGDATA…ITVPLESIKP (210 aa). Disordered regions lie at residues 320–421 and 434–492; these read LDLS…SGLD and SLPP…QPVP. Position 355 is a phosphoserine; by CK2 (Ser355). An Autoinhibitory motif is present at residues 358–362; it reads DDELM. Over residues 381–390 the composition is skewed to polar residues; that stretch reads GWNSFQSSDA. The residue at position 418 (Ser418) is a Phosphoserine. The span at 462–480 shows a compositional bias: low complexity; sequence SSSCSSPSSSATSLLHTVS. Positions 481 to 490 are enriched in pro residues; the sequence is PEPPRPPQQP. One can recognise a GAE domain in the interval 510–631; sequence SNILPVTVYD…NEMGDVDQFP (122 aa).

It belongs to the GGA protein family. As to quaternary structure, monomer. Interacts with GGA2 and GGA3. Binds to clathrin and activated ARFs, including ARF1, ARF5 and ARF6. Interacts with RABEP1. Interacts with RABGEF1. Interacts with the type-I membrane proteins LRP3, M6PR/CD-MPR and IGF2R/CI-MPR. Interacts (via N-terminal VHS domain) with SORL1/sorLA and SORT1 (via C-terminal cytosolic domain). Interacts with EPN4. Interacts with CCDC91. Interacts with HEATR5B/p200a. Interacts with SYNRG/gamma-synergin. Interacts (via GAE doamin) with NECAP1 and NECAP2. Interacts (via GAE domain) with AFTPH/aftiphilin. Interacts with TSG101 and UBC. Interacts with RNF11. Interacts (via VHS domain) with BACE1 (via DXXLL motif); the interaction highly increases when BACE1 is phosphorylated at 'Ser-498'. Interacts with CNST. Interacts with ADRA2B. Interacts with ARL3; the interaction recruits, in collaboration with RABEP1, PKD1:PKD2 complex to trans-Golgi network and is required for ciliary targeting. In terms of processing, phosphorylated by CK2 and dephosphorylated by PP2A. Phosphorylation of GGA1 allows the internal DXXLL motif to bind the VHS domain and to inhibit the recognition of cargo signals. Post-translationally, ubiquitinated. Ubiquitously expressed.

Its subcellular location is the golgi apparatus. The protein localises to the trans-Golgi network membrane. It localises to the endosome membrane. The protein resides in the early endosome membrane. Its function is as follows. Plays a role in protein sorting and trafficking between the trans-Golgi network (TGN) and endosomes. Mediates the ARF-dependent recruitment of clathrin to the TGN and binds ubiquitinated proteins and membrane cargo molecules with a cytosolic acidic cluster-dileucine (DXXLL) motif. Mediates export of the GPCR receptor ADRA2B to the cell surface. Required for targeting PKD1:PKD2 complex from the trans-Golgi network to the cilium membrane. Regulates retrograde transport of proteins such as phosphorylated form of BACE1 from endosomes to the trans-Golgi network. This chain is ADP-ribosylation factor-binding protein GGA1 (GGA1), found in Homo sapiens (Human).